The primary structure comprises 42 residues: Photosystem I reaction center subunit IX (42 aa).

Residues 7–27 (YLSAAPVLSTLWLGALAGLLI) form a helical membrane-spanning segment.

This sequence belongs to the PsaJ family.

The protein localises to the plastid membrane. Its function is as follows. May help in the organization of the PsaE and PsaF subunits. The polypeptide is Photosystem I reaction center subunit IX (Cuscuta exaltata (Tall dodder)).